We begin with the raw amino-acid sequence, 342 residues long: MVSVKKIVASALVGVLMFSAVGCNMVEKTQAAIDKTTVATVNGEKITLGEVDSHLKGVFTQMKSQYGDKYMDDPQVAQQILQQRQGILNSLVEEKILVVEANKENIVPSEEELNKKIEQQIKLYKEQYGEEGYKKAVESMGYNEDTFKEYLKNQFIADAAASNASKDIKVTDEEAQKYYDENKKQFEVQAKGVLARHLLFENEEEAQKAYDEIQSGKTTFNDLFTKYENNKLEKKTPIAESFVVPDENAQVAKEFVEGLKSLKEGEISKPIKTQFGYHIIQAGATYEKGAQLPFNEVKSQIIQILKQQKDSQKLKSDMDQWKKDLNVKVYDDKLQEGLKISK.

The signal sequence occupies residues 1 to 22; sequence MVSVKKIVASALVGVLMFSAVG. Cys23 is lipidated: N-palmitoyl cysteine. Residue Cys23 is the site of S-diacylglycerol cysteine attachment. Residues 190–284 form the PpiC domain; it reads AKGVLARHLL…FGYHIIQAGA (95 aa).

Belongs to the PrsA family.

Its subcellular location is the cell membrane. The enzyme catalyses [protein]-peptidylproline (omega=180) = [protein]-peptidylproline (omega=0). In terms of biological role, plays a major role in protein secretion by helping the post-translocational extracellular folding of several secreted proteins. This chain is Foldase protein PrsA, found in Clostridium perfringens (strain SM101 / Type A).